The primary structure comprises 616 residues: Heme A synthase-mitochondrial ferredoxin fusion protein (616 aa).

Residues 1–45 constitute a mitochondrion transit peptide; the sequence is MNISRSSGLMRQFLLQPLRKGCDISCLGRSSWRMSRSFSGSSVLN. The segment at 45–465 is heme a synthase cox15-like; sequence NEINLSRTKN…AALSLAQRLH (421 aa). Over 46 to 97 the chain is Mitochondrial matrix; it reads EINLSRTKNLFLNDCKFNKNSFEKFFARRLSNSVAPTPGGILQETEKIPSKK. Residues 98 to 118 form a helical membrane-spanning segment; that stretch reads VAFWLLGSSALVLAIVVVGGI. At 119 to 182 the chain is on the mitochondrial intermembrane side; the sequence is TRLTESGLSI…NIFFWEWFHR (64 aa). His181 is a heme o binding site. The helical transmembrane segment at 183–203 threads the bilayer; sequence VLGRGIGLTILLPSIYMIVTK. Over 204–212 the chain is Mitochondrial matrix; the sequence is RASPWLSKR. The helical transmembrane segment at 213 to 233 threads the bilayer; it reads LIGLTGLVGLQGVIGWWMVKS. Topologically, residues 234-254 are mitochondrial intermembrane; that stretch reads GLSEELFSDGSHPRVSHYRLA. A helical transmembrane segment spans residues 255-275; it reads THLAAAVALYIGLVWTGHGIL. His256 lines the heme o pocket. Over 276–311 the chain is Mitochondrial matrix; that stretch reads QRHAFLKSMKSGSTSQLTSMVSSVQKMKGFRTSVNS. A helical transmembrane segment spans residues 312–332; the sequence is FVGLVLITLLSGAFVAGLDAG. At 333 to 380 the chain is on the mitochondrial intermembrane side; it reads MIYCTFPEMGEGRLAPSKSELFDQRFCRKDDKSDLIWRNMIDNPSLVQ. The chain crosses the membrane as a helical span at residues 381–401; the sequence is LEHRILAITTFVAACGLFIFS. Residue His383 participates in heme b binding. The Mitochondrial matrix portion of the chain corresponds to 402-417; the sequence is RAKRNILPKKIKTSIN. A helical transmembrane segment spans residues 418-438; sequence VVTGVVTAQATLGIMTLIYVV. Position 439 (Pro439) is a topological domain, mitochondrial intermembrane. The helical transmembrane segment at 440 to 460 threads the bilayer; the sequence is VPLAALHQAGSLVTLTAALSL. His446 provides a ligand contact to heme b. Residues 461 to 616 lie on the Mitochondrial matrix side of the membrane; it reads AQRLHPEYAL…RNIRLERPKA (156 aa). Residues 502–606 enclose the 2Fe-2S ferredoxin-type domain; the sequence is FRPSFHSEIK…GIRVRIPAQT (105 aa). The segment at 516-616 is mitochondrial ferredoxin yah1-like; that stretch reads GTGIKVFFVT…RNIRLERPKA (101 aa). Cys541, Cys547, Cys550, and Cys587 together coordinate [2Fe-2S] cluster.

This sequence in the N-terminal section; belongs to the COX15/CtaA family. Type 2 subfamily. The protein in the C-terminal section; belongs to the adrenodoxin/putidaredoxin family. Homodimer. Heme b is required as a cofactor. The cofactor is [2Fe-2S] cluster. The etp1 preprotein is cleaved into 2 chains after imort into mitochondria. The N-terminal chain containing a heme A synthase cox15-like domain etp1(cd) is a subunit of the membrane-embedded cytochrome c oxidase complex and functions in the respiratory chain. The C-terminal chain containing a ferredoxin yah1-like domain etp1(fd) is released and serves in the matrix as electron transfer protein.

It localises to the mitochondrion inner membrane. The protein resides in the mitochondrion matrix. The catalysed reaction is Fe(II)-heme o + 2 A + H2O = Fe(II)-heme a + 2 AH2. It participates in porphyrin-containing compound metabolism; heme A biosynthesis; heme A from heme O: step 1/1. In terms of biological role, catalyzes the second reaction in the biosynthesis of heme A, a prosthetic group of mitochondrial cytochrome c oxidase (CcO). Heme A is synthesized from heme B by two sequential enzymatic reactions catalyzed by heme O synthase (HOS) and heme A synthase (HAS). HAS catalyzes the conversion of heme O to heme A by two successive hydroxylations of the methyl group at C8, in a reaction that involves matrix ferredoxin and ferredoxin reductase. The first hydroxylation forms heme I, the second hydroxylation results in an unstable dihydroxymethyl group, which spontaneously dehydrates, resulting in the formyl group of heme A. Its function is as follows. Iron-sulfur protein that transfers electrons in a wide variety of metabolic reactions. Involved in heme A biosynthesis and in iron-sulfur cluster assembly. Transfers electrons from adrenodoxin reductase arh1 to heme A synthase etp1(cd), a heme protein that catalyzes the conversion of heme O to heme A. Required for the de novo synthesis of Fe-S clusters on iron sulfur cluster assembly protein isu1. Interact in its reduced state with isu1 to productively deliver electrons for Fe-S cluster synthesis. Essential for coenzyme Q biosynthesis. May transfer the electrons required for the hydroxylation reaction performed by coq6. The protein is Heme A synthase-mitochondrial ferredoxin fusion protein of Schizosaccharomyces pombe (strain 972 / ATCC 24843) (Fission yeast).